We begin with the raw amino-acid sequence, 146 residues long: NADH-ubiquinone oxidoreductase chain 6 (146 aa).

The next 4 membrane-spanning stretches (helical) occupy residues 10–30, 43–63, 81–101, and 124–144; these read ILAIGLLSPVQSILALILLFV, LMGILYILVYVGAIAILFLFI, VIVLILIPLIPLDIAFEPIAI, and APMLVIIGIILIVSVIGAIAM.

This sequence belongs to the complex I subunit 6 family.

The protein resides in the mitochondrion membrane. It carries out the reaction a ubiquinone + NADH + 5 H(+)(in) = a ubiquinol + NAD(+) + 4 H(+)(out). Functionally, core subunit of the mitochondrial membrane respiratory chain NADH dehydrogenase (Complex I) that is believed to belong to the minimal assembly required for catalysis. Complex I functions in the transfer of electrons from NADH to the respiratory chain. The immediate electron acceptor for the enzyme is believed to be ubiquinone. The protein is NADH-ubiquinone oxidoreductase chain 6 (NAD6) of Candida albicans (strain SC5314 / ATCC MYA-2876) (Yeast).